A 78-amino-acid polypeptide reads, in one-letter code: ATP synthase subunit a (78 aa).

Helical transmembrane passes span 13-33 (LFGN…LGTS), 35-55 (FLGA…GMFI), and 57-77 (SLQA…KVEA).

The protein belongs to the ATPase A chain family. In terms of assembly, F-type ATPases have 2 components, CF(1) - the catalytic core - and CF(0) - the membrane proton channel. CF(1) has five subunits: alpha(3), beta(3), gamma(1), delta(1), epsilon(1). CF(0) has three main subunits: a(1), b(2) and c(9-12). The alpha and beta chains form an alternating ring which encloses part of the gamma chain. CF(1) is attached to CF(0) by a central stalk formed by the gamma and epsilon chains, while a peripheral stalk is formed by the delta and b chains.

Its subcellular location is the cell membrane. Key component of the proton channel; it plays a direct role in the translocation of protons across the membrane. This Alkalihalobacillus alcalophilus (Bacillus alcalophilus) protein is ATP synthase subunit a (atpB).